Reading from the N-terminus, the 128-residue chain is Probable 4-amino-4-deoxy-L-arabinose-phosphoundecaprenol flippase subunit ArnF (128 aa).

Residues 1 to 21 traverse the membrane as a helical segment; sequence MGLMWGLFSVIIASAAQLSLG. Over 22-35 the chain is Periplasmic; that stretch reads YAASHLPPMTQFWD. Residues 36–56 traverse the membrane as a helical segment; it reads FIAAFFAFGPGARMLVVGLVG. Residues 57–76 are Cytoplasmic-facing; sequence YLLSVFCWYKALHQLALSKA. The chain crosses the membrane as a helical span at residues 77–97; sequence YALLSMSYVLVWIASMVLPGW. Topologically, residues 98–100 are periplasmic; sequence EGT. A helical membrane pass occupies residues 101-121; sequence FSLKALLGVACIMSGLMLIFL. Residues 122–128 lie on the Cytoplasmic side of the membrane; the sequence is PTTKQRY.

It belongs to the ArnF family. As to quaternary structure, heterodimer of ArnE and ArnF.

It localises to the cell inner membrane. It participates in bacterial outer membrane biogenesis; lipopolysaccharide biosynthesis. Translocates 4-amino-4-deoxy-L-arabinose-phosphoundecaprenol (alpha-L-Ara4N-phosphoundecaprenol) from the cytoplasmic to the periplasmic side of the inner membrane. The protein is Probable 4-amino-4-deoxy-L-arabinose-phosphoundecaprenol flippase subunit ArnF of Escherichia fergusonii (strain ATCC 35469 / DSM 13698 / CCUG 18766 / IAM 14443 / JCM 21226 / LMG 7866 / NBRC 102419 / NCTC 12128 / CDC 0568-73).